The primary structure comprises 166 residues: Small ribosomal subunit protein uS5 (166 aa).

The 64-residue stretch at 11 to 74 (LQEKLIAVNR…EKARRNMINV (64 aa)) folds into the S5 DRBM domain.

It belongs to the universal ribosomal protein uS5 family. As to quaternary structure, part of the 30S ribosomal subunit. Contacts proteins S4 and S8.

With S4 and S12 plays an important role in translational accuracy. Functionally, located at the back of the 30S subunit body where it stabilizes the conformation of the head with respect to the body. The protein is Small ribosomal subunit protein uS5 of Actinobacillus pleuropneumoniae serotype 5b (strain L20).